Reading from the N-terminus, the 391-residue chain is Elongation factor Tu (391 aa).

The region spanning Lys-10–Glu-201 is the tr-type G domain. Positions Gly-19–Thr-26 are G1. Gly-19–Thr-26 is a binding site for GTP. Residue Thr-26 participates in Mg(2+) binding. Positions Gly-55–Ser-59 are G2. The G3 stretch occupies residues Asp-76 to Gly-79. GTP contacts are provided by residues Asp-76 to His-80 and Asn-131 to Asp-134. The G4 stretch occupies residues Asn-131–Asp-134. Residues Ser-169 to Leu-171 are G5.

The protein belongs to the TRAFAC class translation factor GTPase superfamily. Classic translation factor GTPase family. EF-Tu/EF-1A subfamily. In terms of assembly, monomer.

The protein localises to the cytoplasm. The enzyme catalyses GTP + H2O = GDP + phosphate + H(+). Its function is as follows. GTP hydrolase that promotes the GTP-dependent binding of aminoacyl-tRNA to the A-site of ribosomes during protein biosynthesis. In Roseobacter denitrificans (strain ATCC 33942 / OCh 114) (Erythrobacter sp. (strain OCh 114)), this protein is Elongation factor Tu.